Reading from the N-terminus, the 170-residue chain is RxLR effector protein CRE16 (170 aa).

The first 23 residues, 1–23, serve as a signal peptide directing secretion; sequence MSKLFYAFAVLAVHVLTSSPTTA. The short motif at 47–68 is the RxLR-dEER element; it reads RFLRSIHEGEDSLKPSAFSEER.

The protein belongs to the RxLR effector family.

The protein localises to the secreted. Its subcellular location is the host cytoplasm. It is found in the host nucleus. Effector that is involved in host plant infection. Contributes to virulence during the early infection stage, by inhibiting plant defense responses induced by both PAMP-triggered immunity (PTI) and effector-triggered immunity (ETI). In Phytophthora infestans (strain T30-4) (Potato late blight agent), this protein is RxLR effector protein CRE16.